A 482-amino-acid chain; its full sequence is MTVIIAGERSGAGKTTITLAMLAYLARQKLRVQSFKVGPDYIDPMFHSQITGRPCRNLDPFLTSEAYVQRCFHYHSQGTPYSLIEGVMGLFDGVPYQGLTDYSSTAHIARLLNLPIVFVMDCQRLSGSVAAIVQGYRHWQPGVNLVGVILNRVGGDRHLELLKIALEPLRIPILGVFFRQQDLTLPDRHLGLVPCGELPQIQQYFDQLAHVAAQQLDWPKLLPLLETPRNLPSPMSLFDVPQKSPQARLAIAQDQAFNFYYADNLDLLTHCGFELIPFSPLEDTELPPAIDGVYLGGGFPELFAEQLSQNQALKDQLKTLIHQGLPTYGECGGLMYLSQSLTNFEGQIFPMLEMLPTAVTMGGKLSLGYRQAQVVNSHSWLWQTESLRGHEFHRSQMTKLPNQALYRQRGLLAIDQNTTDGWCVGSVQASYLHLHWGSQISTVEKFRAACLAFQKKLSYLGKHPPFKSVPLRNTGGDAHGRE.

In terms of domain architecture, GATase cobBQ-type spans 248 to 441 (RLAIAQDQAF…LHLHWGSQIS (194 aa)). Cysteine 331 (nucleophile) is an active-site residue.

Belongs to the CobB/CbiA family. Mg(2+) serves as cofactor.

It carries out the reaction cob(II)yrinate + 2 L-glutamine + 2 ATP + 2 H2O = cob(II)yrinate a,c diamide + 2 L-glutamate + 2 ADP + 2 phosphate + 2 H(+). The protein operates within cofactor biosynthesis; adenosylcobalamin biosynthesis; cob(II)yrinate a,c-diamide from sirohydrochlorin (anaerobic route): step 10/10. Functionally, catalyzes the ATP-dependent amidation of the two carboxylate groups at positions a and c of cobyrinate, using either L-glutamine or ammonia as the nitrogen source. The polypeptide is Cobyrinate a,c-diamide synthase (Synechocystis sp. (strain ATCC 27184 / PCC 6803 / Kazusa)).